We begin with the raw amino-acid sequence, 162 residues long: UPF0114 protein PST_0950 (162 aa).

A run of 3 helical transmembrane segments spans residues 15–35, 53–73, and 136–156; these read LLAPIYFGLAFALLALAIKFF, LVLTLLSLIDMALVGGLLVMV, and LMWYVIIHLTFVVSAFAMGYM.

Belongs to the UPF0114 family.

Its subcellular location is the cell membrane. In Stutzerimonas stutzeri (strain A1501) (Pseudomonas stutzeri), this protein is UPF0114 protein PST_0950.